The primary structure comprises 163 residues: Neurotrophin-3 (163 aa).

A signal peptide spans 1–3 (IQS). A propeptide spanning residues 4–119 (TSMDQGILTE…ALNRTSRRKR (116 aa)) is cleaved from the precursor. Disordered stretches follow at residues 38–60 (ARTK…ATAS) and 90–131 (LLSE…YSVC). N-linked (GlcNAc...) asparagine glycosylation occurs at Asn-112.

The protein belongs to the NGF-beta family.

The protein resides in the secreted. Functionally, seems to promote the survival of visceral and proprioceptive sensory neurons. In Eunectes notaeus (Yellow anaconda), this protein is Neurotrophin-3 (NTF3).